The following is a 331-amino-acid chain: Lipoate-protein ligase LplJ (331 aa).

Residues 27–214 (DPEQQYLLFY…HIFNTNDVGN (188 aa)) enclose the BPL/LPL catalytic domain. ATP-binding positions include R69, 74–77 (GAVY), and K131. K131 lines the (R)-lipoate pocket.

This sequence belongs to the LplA family.

Its subcellular location is the cytoplasm. It catalyses the reaction L-lysyl-[lipoyl-carrier protein] + (R)-lipoate + ATP = N(6)-[(R)-lipoyl]-L-lysyl-[lipoyl-carrier protein] + AMP + diphosphate + H(+). It participates in protein modification; protein lipoylation via exogenous pathway; protein N(6)-(lipoyl)lysine from lipoate: step 1/2. The protein operates within protein modification; protein lipoylation via exogenous pathway; protein N(6)-(lipoyl)lysine from lipoate: step 2/2. Catalyzes both the ATP-dependent activation of exogenously supplied lipoate to lipoyl-AMP and the transfer of the activated lipoyl onto the lipoyl domains of lipoate-dependent enzymes. Is also able to use octanoate as substrate. The sequence is that of Lipoate-protein ligase LplJ (lplJ) from Bacillus subtilis (strain 168).